We begin with the raw amino-acid sequence, 147 residues long: Probable WRKY transcription factor 45 (147 aa).

The interval 21–52 (TEFHGVDNSAQPTTSSEEKPRSKKKKKEREAR) is disordered. Residues 59–124 (SQVDILDDGY…YQGVHTHAVD (66 aa)) constitute a DNA-binding region (WRKY). Residues cysteine 90, cysteine 95, histidine 119, and histidine 121 each contribute to the Zn(2+) site.

This sequence belongs to the WRKY group I family.

The protein localises to the nucleus. Functionally, transcription factor. Interacts specifically with the W box (5'-(T)TGAC[CT]-3'), a frequently occurring elicitor-responsive cis-acting element. The chain is Probable WRKY transcription factor 45 (WRKY45) from Arabidopsis thaliana (Mouse-ear cress).